Here is a 242-residue protein sequence, read N- to C-terminus: NLP effector protein 8 (242 aa).

Residues 1-17 (MHLTVFYLVALCTFASA) form the signal peptide. The short motif at 108 to 118 (AIMYAWYFPRD) is the Conserved undecapeptide motif element. The short motif at 127–133 (GHRNAWE) is the Conserved heptapeptide motif element. Asparagine 206 carries an N-linked (GlcNAc...) asparagine glycan.

This sequence belongs to the Necrosis inducing protein (NPP1) family.

The protein resides in the secreted. Functionally, probable secreted effector that may act as a pathogen-associated molecular pattern (PAMP) recognized by the plant immune system. The polypeptide is NLP effector protein 8 (Plasmopara viticola (Downy mildew of grapevine)).